The primary structure comprises 2116 residues: Unconventional myosin-VIIb (2116 aa).

Residues Q65–S760 form the Myosin motor domain. G158–T165 contributes to the ATP binding site. Residues L637 to E659 are actin-binding. IQ domains are found at residues I745 to R765, L763 to T792, Q786 to R815, E814 to Q834, M832 to V861, and K855 to L884. Position 904 is a phosphoserine (S904). The tract at residues E916–N1542 is mediates interaction with ANKS4B. One can recognise a MyTH4 1 domain in the interval H989 to K1192. The 310-residue stretch at I1197 to A1506 folds into the FERM 1 domain. S1371 carries the post-translational modification Phosphoserine. Positions E1501 to T1567 constitute an SH3 domain. Positions E1501 to T2116 are mediates interaction with CDHR2, CDHR5 and USH1C. 2 consecutive MyTH4 domains span residues Y1644 to E1793 and E1790 to L1896. S1645 is subject to Phosphoserine. Residues I1799 to M2102 enclose the FERM 2 domain.

The protein belongs to the TRAFAC class myosin-kinesin ATPase superfamily. Myosin family. Part of the IMAC/intermicrovillar adhesion complex/intermicrovillar tip-link complex composed of ANKS4B, MYO7B, USH1C, CDHR2 and CDHR5. Interacts with CDHR2. Interacts with CDHR5. Interacts with USH1C. Interacts with ANKS4B; requires initial interaction with USH1C. Interacts with CALML4; the interaction mediates the association of CALML4 with the IMAC/intermicrovillar adhesion complex.

It is found in the cytoplasm. The protein resides in the cytoskeleton. Its subcellular location is the cell projection. It localises to the microvillus. In terms of biological role, myosins are actin-based motor molecules with ATPase activity. Their highly divergent tails are presumed to bind to membranous compartments, which would be moved relative to actin filaments. As part of the intermicrovillar adhesion complex/IMAC plays a role in epithelial brush border differentiation, controlling microvilli organization and length. May link the complex to the actin core bundle of microvilli. The chain is Unconventional myosin-VIIb from Homo sapiens (Human).